The sequence spans 520 residues: Glutamate--cysteine ligase (520 aa).

It belongs to the glutamate--cysteine ligase type 1 family. Type 1 subfamily.

It catalyses the reaction L-cysteine + L-glutamate + ATP = gamma-L-glutamyl-L-cysteine + ADP + phosphate + H(+). It functions in the pathway sulfur metabolism; glutathione biosynthesis; glutathione from L-cysteine and L-glutamate: step 1/2. The sequence is that of Glutamate--cysteine ligase from Serratia proteamaculans (strain 568).